The sequence spans 388 residues: Succinate--CoA ligase [ADP-forming] subunit beta (388 aa).

An ATP-grasp domain is found at 9–244; the sequence is KEIFARYGLP…PTQESELEVK (236 aa). ATP contacts are provided by residues Lys-46, 53–55, Glu-99, Thr-102, and Glu-107; that span reads GRG. Residues Asn-199 and Asp-213 each contribute to the Mg(2+) site. Residues Asn-264 and 321-323 contribute to the substrate site; that span reads GIL.

The protein belongs to the succinate/malate CoA ligase beta subunit family. In terms of assembly, heterotetramer of two alpha and two beta subunits. The cofactor is Mg(2+).

It carries out the reaction succinate + ATP + CoA = succinyl-CoA + ADP + phosphate. It catalyses the reaction GTP + succinate + CoA = succinyl-CoA + GDP + phosphate. It functions in the pathway carbohydrate metabolism; tricarboxylic acid cycle; succinate from succinyl-CoA (ligase route): step 1/1. Succinyl-CoA synthetase functions in the citric acid cycle (TCA), coupling the hydrolysis of succinyl-CoA to the synthesis of either ATP or GTP and thus represents the only step of substrate-level phosphorylation in the TCA. The beta subunit provides nucleotide specificity of the enzyme and binds the substrate succinate, while the binding sites for coenzyme A and phosphate are found in the alpha subunit. In Persephonella marina (strain DSM 14350 / EX-H1), this protein is Succinate--CoA ligase [ADP-forming] subunit beta.